Consider the following 944-residue polypeptide: Valine--tRNA ligase (944 aa).

The short motif at 43-53 is the 'HIGH' region element; the sequence is PNVTGTLHMGH. The short motif at 550–554 is the 'KMSKS' region element; the sequence is KMSKS. Lys553 provides a ligand contact to ATP. Residues 878–942 are a coiled coil; sequence LVDMDAERTR…QLTGLREQRA (65 aa).

Belongs to the class-I aminoacyl-tRNA synthetase family. ValS type 1 subfamily. As to quaternary structure, monomer.

The protein resides in the cytoplasm. The enzyme catalyses tRNA(Val) + L-valine + ATP = L-valyl-tRNA(Val) + AMP + diphosphate. Its function is as follows. Catalyzes the attachment of valine to tRNA(Val). As ValRS can inadvertently accommodate and process structurally similar amino acids such as threonine, to avoid such errors, it has a 'posttransfer' editing activity that hydrolyzes mischarged Thr-tRNA(Val) in a tRNA-dependent manner. The sequence is that of Valine--tRNA ligase from Xanthomonas axonopodis pv. citri (strain 306).